A 305-amino-acid chain; its full sequence is tRNA pseudouridine synthase B (305 aa).

D48 functions as the Nucleophile in the catalytic mechanism.

It belongs to the pseudouridine synthase TruB family. Type 1 subfamily.

It catalyses the reaction uridine(55) in tRNA = pseudouridine(55) in tRNA. Functionally, responsible for synthesis of pseudouridine from uracil-55 in the psi GC loop of transfer RNAs. The protein is tRNA pseudouridine synthase B of Pseudomonas syringae pv. syringae (strain B728a).